The following is a 126-amino-acid chain: Small ribosomal subunit protein uS13 (126 aa).

The segment at 94 to 126 (GLPVRGQKTRNNAHTVKGKPKAAIAGKKKNKVN) is disordered. Positions 109–126 (VKGKPKAAIAGKKKNKVN) are enriched in basic residues.

This sequence belongs to the universal ribosomal protein uS13 family. As to quaternary structure, part of the 30S ribosomal subunit. Forms a loose heterodimer with protein S19. Forms two bridges to the 50S subunit in the 70S ribosome.

Functionally, located at the top of the head of the 30S subunit, it contacts several helices of the 16S rRNA. In the 70S ribosome it contacts the 23S rRNA (bridge B1a) and protein L5 of the 50S subunit (bridge B1b), connecting the 2 subunits; these bridges are implicated in subunit movement. Contacts the tRNAs in the A and P-sites. This Aster yellows witches'-broom phytoplasma (strain AYWB) protein is Small ribosomal subunit protein uS13.